A 267-amino-acid polypeptide reads, in one-letter code: Dynein axonemal assembly factor 19 homolog (267 aa).

Disordered stretches follow at residues 86–111 and 226–250; these read ISQS…RDWR and HQGK…VDPC.

This sequence belongs to the DNAAF19/PR46b family. Homodimer.

The protein localises to the cytoplasm. The protein resides in the cell projection. It is found in the cilium. It localises to the flagellum. In terms of biological role, dynein-attachment factor required for cilia motility. This is Dynein axonemal assembly factor 19 homolog (PR46b) from Chlamydomonas reinhardtii (Chlamydomonas smithii).